Reading from the N-terminus, the 331-residue chain is Tetraacyldisaccharide 4'-kinase (331 aa).

Residue 60 to 67 (TIGGTGKT) participates in ATP binding.

This sequence belongs to the LpxK family.

The enzyme catalyses a lipid A disaccharide + ATP = a lipid IVA + ADP + H(+). The protein operates within glycolipid biosynthesis; lipid IV(A) biosynthesis; lipid IV(A) from (3R)-3-hydroxytetradecanoyl-[acyl-carrier-protein] and UDP-N-acetyl-alpha-D-glucosamine: step 6/6. Its function is as follows. Transfers the gamma-phosphate of ATP to the 4'-position of a tetraacyldisaccharide 1-phosphate intermediate (termed DS-1-P) to form tetraacyldisaccharide 1,4'-bis-phosphate (lipid IVA). The polypeptide is Tetraacyldisaccharide 4'-kinase (Pseudomonas syringae pv. tomato (strain ATCC BAA-871 / DC3000)).